Consider the following 471-residue polypeptide: Regulator of microtubule dynamics protein 3 (471 aa).

The Mitochondrial intermembrane portion of the chain corresponds to 1-12 (MSRLGALGGSRA). A helical transmembrane segment spans residues 13 to 35 (GLGLLLGTAAGLGFLCVLYSQRW). Residues 36-471 (KRTQRHGRSQ…LEELEVILGK (436 aa)) are Cytoplasmic-facing. Residues serine 44, serine 46, serine 50, and serine 57 each carry the phosphoserine modification. Positions 91–125 (LDRLDFVLTSLMALRREVEELQRSLQGLAGEIVGE) form a coiled coil. Residues 157 to 163 (VYFTASS) carry the FFAT motif. Position 160 is a phosphothreonine (threonine 160). A disordered region spans residues 168-203 (TDAESEGGYTTANAESDYERDSDKESEDAEDEVSCE). Residues serine 183, serine 193, serine 212, and serine 233 each carry the phosphoserine modification. A compositionally biased stretch (acidic residues) spans 191–201 (KESEDAEDEVS).

This sequence belongs to the RMDN family. Interacts with PTPN2. Interacts with microtubules. Interacts with VAPB. Interacts (via FFAT motif) with MOSPD2 (via MSP domain). Interacts (via phosphorylated FFAT motif) with MOSPD2, VAPA and VAPB. Phosphorylation at Thr-160 of the FFAT motif activates interaction with MOSPD2, VAPA and VAPB.

It is found in the mitochondrion outer membrane. The protein localises to the cytoplasm. The protein resides in the nucleus. It localises to the cytoskeleton. Its subcellular location is the spindle. It is found in the spindle pole. In terms of biological role, involved in cellular calcium homeostasis regulation. May participate in differentiation and apoptosis of keratinocytes. Overexpression induces apoptosis. This is Regulator of microtubule dynamics protein 3 from Rattus norvegicus (Rat).